Here is a 187-residue protein sequence, read N- to C-terminus: ATP synthase subunit delta, chloroplastic (187 aa).

It belongs to the ATPase delta chain family. F-type ATPases have 2 components, F(1) - the catalytic core - and F(0) - the membrane proton channel. F(1) has five subunits: alpha(3), beta(3), gamma(1), delta(1), epsilon(1). CF(0) has four main subunits: a(1), b(1), b'(1) and c(10-14). The alpha and beta chains form an alternating ring which encloses part of the gamma chain. F(1) is attached to F(0) by a central stalk formed by the gamma and epsilon chains, while a peripheral stalk is formed by the delta, b and b' chains.

It is found in the plastid. The protein localises to the chloroplast thylakoid membrane. Its function is as follows. F(1)F(0) ATP synthase produces ATP from ADP in the presence of a proton or sodium gradient. F-type ATPases consist of two structural domains, F(1) containing the extramembraneous catalytic core and F(0) containing the membrane proton channel, linked together by a central stalk and a peripheral stalk. During catalysis, ATP synthesis in the catalytic domain of F(1) is coupled via a rotary mechanism of the central stalk subunits to proton translocation. Functionally, this protein is part of the stalk that links CF(0) to CF(1). It either transmits conformational changes from CF(0) to CF(1) or is implicated in proton conduction. In Thalassiosira pseudonana (Marine diatom), this protein is ATP synthase subunit delta, chloroplastic.